The chain runs to 235 residues: GVVDDNSNRERLIVGLDVPNIKQAEKLVTQLGDEVSFYKIGYQLAFSGGMDFVQDLIQARKKVFFDMKLLDIDHTVARAVENIAKLGVSMLTLHAYPTVMKAAVAAAKGSDLCLLGVTVLTSMDEADLHNAGYKDSPKKLAFKRAEQAREAGMGGIVSSALEAAALRKVIGSDMALVTPGIRPMGSDKGDQKRVMAPRQALDSGASHLVVARPIIQADDPLVATKKILAEMADGC.

Residues D17, K39, 66-75 (DMKLLDIDHT), T121, R182, Q191, and R212 contribute to the substrate site. The Proton donor role is filled by K68.

This sequence belongs to the OMP decarboxylase family. Type 1 subfamily. In terms of assembly, homodimer.

The enzyme catalyses orotidine 5'-phosphate + H(+) = UMP + CO2. It functions in the pathway pyrimidine metabolism; UMP biosynthesis via de novo pathway; UMP from orotate: step 2/2. Functionally, catalyzes the decarboxylation of orotidine 5'-monophosphate (OMP) to uridine 5'-monophosphate (UMP). This is Orotidine 5'-phosphate decarboxylase from Bartonella bacilliformis.